We begin with the raw amino-acid sequence, 285 residues long: TATA box-binding protein-associated factor RNA polymerase I subunit D (285 aa).

Disordered regions lie at residues 1-49 (MAQS…RIPT) and 85-112 (KKKRKKRKKRKYKPKLRRQGRPSGTRNI). The segment covering 21–39 (GNQSDDSSNSSLFKTQCVP) has biased composition (polar residues). S24 carries the phosphoserine modification. Residues 85–104 (KKKRKKRKKRKYKPKLRRQG) are compositionally biased toward basic residues. Residue S134 is modified to Phosphoserine. The disordered stretch occupies residues 193 to 219 (HKYMDDDGPLSPIEEPSTEDEATDPQS). S229 is subject to Phosphoserine. Basic and acidic residues-rich tracts occupy residues 242-264 (NLEQGKIKKESAFSKKSKAKDAT) and 273-285 (KGGEHACLHSEVS). The interval 242–285 (NLEQGKIKKESAFSKKSKAKDATQRGNRRSWKGGEHACLHSEVS) is disordered.

Component of the transcription factor SL1/TIF-IB complex, composed of TBP and at least TAF1A, TAF1B, TAF1C and TAF1D. Interacts with UBTF.

It is found in the nucleus. In terms of biological role, component of the transcription factor SL1/TIF-IB complex, which is involved in the assembly of the PIC (preinitiation complex) during RNA polymerase I-dependent transcription. The rate of PIC formation probably is primarily dependent on the rate of association of SL1/TIF-IB with the rDNA promoter. SL1/TIF-IB is involved in stabilization of nucleolar transcription factor 1/UBTF on rDNA. Formation of SL1/TIF-IB excludes the association of TBP with TFIID subunits. This is TATA box-binding protein-associated factor RNA polymerase I subunit D (Taf1d) from Rattus norvegicus (Rat).